The sequence spans 446 residues: Histone acetyltransferase type B subunit 2 (446 aa).

WD repeat units lie at residues 138-178 (DHPG…ITPS), 189-229 (GHKE…GTSK), 231-270 (LKYS…QIID), 286-326 (GHSD…SKVH), and 330-370 (GHQD…DEQT). The interval 372–376 (DDAED) is interaction with the histone H4 N-terminus. The WD 6 repeat unit spans residues 387–427 (GHTNHLADFSWNRNDPWLVCSAAEDNLLQIWKVANSIVSKE). The disordered stretch occupies residues 427–446 (EPADMSTPELDDPKPKQSSH). A compositionally biased stretch (basic and acidic residues) spans 437 to 446 (DDPKPKQSSH).

This sequence belongs to the WD repeat RBAP46/RBAP48/MSI1 family. In terms of assembly, component of the HAT-B complex composed of at least hat-1 and hat-2. The HAT-B complex binds to histone H4 tail.

The protein resides in the cytoplasm. Its subcellular location is the nucleus. Its function is as follows. Regulatory subunit of the histone acetylase B (HAT-B) complex. The complex acetylates 'Lys-12' of histone H4 which is required for telomeric silencing. This chain is Histone acetyltransferase type B subunit 2 (hat-2), found in Neurospora crassa (strain ATCC 24698 / 74-OR23-1A / CBS 708.71 / DSM 1257 / FGSC 987).